The sequence spans 669 residues: uncharacterized protein (669 aa).

12 helical membrane passes run 9–29 (PLVI…IFIA), 48–68 (FSWF…ILSV), 87–107 (FLSW…MFFG), 139–159 (WGIH…YFGF), 186–206 (AIDV…LGFG), 224–244 (SFAL…FSAI), 259–279 (LTLA…LYLL), 314–334 (WTVL…LFIA), 345–365 (FIFG…TVFG), 397–417 (YLPL…LFFI), 444–464 (AIMW…SGGL), and 470–490 (MTLI…FSLW).

The protein belongs to the BCCT transporter (TC 2.A.15) family.

It localises to the cell inner membrane. This is an uncharacterized protein from Haemophilus influenzae (strain ATCC 51907 / DSM 11121 / KW20 / Rd).